Reading from the N-terminus, the 473-residue chain is Maltose fermentation regulatory protein MAL63 (473 aa).

Residues 8–34 constitute a DNA-binding region (zn(2)-C6 fungal-type); the sequence is CDCCRVRRVKCDRNKPCNRCIQRNLNC. A Nuclear localization signal motif is present at residues 41–49; sequence KKRGPKSIR.

The protein belongs to the MAL13 family.

The protein resides in the nucleus. Regulates the coordinate transcription of structural MAL6S (maltase) and MAL6T (maltose permease) genes. The sequence is that of Maltose fermentation regulatory protein MAL63 (MAL63) from Saccharomyces cerevisiae (Baker's yeast).